Reading from the N-terminus, the 122-residue chain is Ribosome-binding factor A (122 aa).

This sequence belongs to the RbfA family. Monomer. Binds 30S ribosomal subunits, but not 50S ribosomal subunits or 70S ribosomes.

Its subcellular location is the cytoplasm. One of several proteins that assist in the late maturation steps of the functional core of the 30S ribosomal subunit. Associates with free 30S ribosomal subunits (but not with 30S subunits that are part of 70S ribosomes or polysomes). Required for efficient processing of 16S rRNA. May interact with the 5'-terminal helix region of 16S rRNA. The chain is Ribosome-binding factor A from Burkholderia mallei (strain NCTC 10229).